Reading from the N-terminus, the 131-residue chain is MTDTTYDNSTELDPRIAARLKRDAKGLVAAVIQQYDTREVLMVGYMNDEALRRTLTTGRVTFWSRSRQEYWRKGDTSGHVQYVKGVSLDCDGDALLVEVDQVGAACHTGKRSCFLEGGPLPVVEGHRPAEQ.

Aspartate 89 serves as a coordination point for Mg(2+). Zn(2+) is bound at residue cysteine 90. Mg(2+) is bound by residues aspartate 91 and aspartate 93. 2 residues coordinate Zn(2+): cysteine 106 and cysteine 113.

This sequence belongs to the PRA-CH family. Homodimer. Mg(2+) serves as cofactor. Zn(2+) is required as a cofactor.

Its subcellular location is the cytoplasm. The catalysed reaction is 1-(5-phospho-beta-D-ribosyl)-5'-AMP + H2O = 1-(5-phospho-beta-D-ribosyl)-5-[(5-phospho-beta-D-ribosylamino)methylideneamino]imidazole-4-carboxamide. It functions in the pathway amino-acid biosynthesis; L-histidine biosynthesis; L-histidine from 5-phospho-alpha-D-ribose 1-diphosphate: step 3/9. Catalyzes the hydrolysis of the adenine ring of phosphoribosyl-AMP. This is Phosphoribosyl-AMP cyclohydrolase from Bifidobacterium longum (strain DJO10A).